The sequence spans 500 residues: Lysine--tRNA ligase (500 aa).

Mg(2+) is bound by residues Glu410 and Glu417.

Belongs to the class-II aminoacyl-tRNA synthetase family. As to quaternary structure, homodimer. Mg(2+) is required as a cofactor.

The protein resides in the cytoplasm. The catalysed reaction is tRNA(Lys) + L-lysine + ATP = L-lysyl-tRNA(Lys) + AMP + diphosphate. The polypeptide is Lysine--tRNA ligase (Pseudomonas entomophila (strain L48)).